A 529-amino-acid chain; its full sequence is Bifunctional purine biosynthesis protein PurH (529 aa).

Residues 1–148 (MQQRRPVRRA…KNHKDVAIVV (148 aa)) enclose the MGS-like domain. At Lys-287 the chain carries N6-acetyllysine.

This sequence belongs to the PurH family.

The catalysed reaction is (6R)-10-formyltetrahydrofolate + 5-amino-1-(5-phospho-beta-D-ribosyl)imidazole-4-carboxamide = 5-formamido-1-(5-phospho-D-ribosyl)imidazole-4-carboxamide + (6S)-5,6,7,8-tetrahydrofolate. It carries out the reaction IMP + H2O = 5-formamido-1-(5-phospho-D-ribosyl)imidazole-4-carboxamide. It participates in purine metabolism; IMP biosynthesis via de novo pathway; 5-formamido-1-(5-phospho-D-ribosyl)imidazole-4-carboxamide from 5-amino-1-(5-phospho-D-ribosyl)imidazole-4-carboxamide (10-formyl THF route): step 1/1. The protein operates within purine metabolism; IMP biosynthesis via de novo pathway; IMP from 5-formamido-1-(5-phospho-D-ribosyl)imidazole-4-carboxamide: step 1/1. This Escherichia coli O157:H7 protein is Bifunctional purine biosynthesis protein PurH.